A 197-amino-acid chain; its full sequence is Inner membrane-spanning protein YciB (197 aa).

5 helical membrane passes run 36–56, 64–84, 90–110, 135–155, and 162–182; these read IYSA…ALFL, GQWL…TFHS, WKAP…HFIG, LAWI…AFTF, and FKVF…GVYL.

It belongs to the YciB family.

It localises to the cell inner membrane. In terms of biological role, plays a role in cell envelope biogenesis, maintenance of cell envelope integrity and membrane homeostasis. The protein is Inner membrane-spanning protein YciB of Pseudomonas putida (strain ATCC 700007 / DSM 6899 / JCM 31910 / BCRC 17059 / LMG 24140 / F1).